A 416-amino-acid chain; its full sequence is D-amino acid dehydrogenase (416 aa).

Residue 3-17 (ITILGSGVIGVTTAY) coordinates FAD.

The protein belongs to the DadA oxidoreductase family. FAD is required as a cofactor.

The catalysed reaction is a D-alpha-amino acid + A + H2O = a 2-oxocarboxylate + AH2 + NH4(+). In terms of biological role, oxidative deamination of D-amino acids. The sequence is that of D-amino acid dehydrogenase from Brucella suis biovar 1 (strain 1330).